A 230-amino-acid chain; its full sequence is ATP phosphoribosyltransferase (230 aa).

Belongs to the ATP phosphoribosyltransferase family. Short subfamily. Heteromultimer composed of HisG and HisZ subunits.

The protein localises to the cytoplasm. The catalysed reaction is 1-(5-phospho-beta-D-ribosyl)-ATP + diphosphate = 5-phospho-alpha-D-ribose 1-diphosphate + ATP. It participates in amino-acid biosynthesis; L-histidine biosynthesis; L-histidine from 5-phospho-alpha-D-ribose 1-diphosphate: step 1/9. In terms of biological role, catalyzes the condensation of ATP and 5-phosphoribose 1-diphosphate to form N'-(5'-phosphoribosyl)-ATP (PR-ATP). Has a crucial role in the pathway because the rate of histidine biosynthesis seems to be controlled primarily by regulation of HisG enzymatic activity. The chain is ATP phosphoribosyltransferase from Agrobacterium fabrum (strain C58 / ATCC 33970) (Agrobacterium tumefaciens (strain C58)).